We begin with the raw amino-acid sequence, 683 residues long: Protein zntD (683 aa).

3 consecutive transmembrane segments (helical) span residues 12–32, 42–62, and 79–99; these read IISTTVLFILSLLAGIAPYWM, LSWSNTFAGGVFFGAGMLHLF, and PFAALCLCVGFLITLFLELII. Residues 120 to 129 show a composition bias toward basic residues; it reads VHLSHGHSHH. 4 disordered regions span residues 120–180, 299–325, 364–390, and 451–489; these read VHLS…TTTT, GFSNNNNNNNNNNNNNNKNNNNNNNNN, CSNDNSNSNNNNSSNNNSSSANITPNT, and IGNSGNIGSNNNNNNNGGGGGGGGNSNIDYNDNEENNNN. Positions 137-149 are enriched in gly residues; that stretch reads GNPGSGVGIGMGS. Composition is skewed to low complexity over residues 160 to 180 and 302 to 325; these read TTSPTITPTTPSEGTTTTTTT and NNNNNNNNNNNNNNKNNNNNNNNN. The segment covering 451 to 465 has biased composition (low complexity); sequence IGNSGNIGSNNNNNN. The segment covering 466-475 has biased composition (gly residues); it reads NGGGGGGGGN. The span at 476–489 shows a compositional bias: low complexity; it reads SNIDYNDNEENNNN. The next 5 helical transmembrane spans lie at 534-554, 564-584, 600-620, 631-651, and 662-682; these read ILLPFILVIALSIHSLFEGLA, VFDILIAIFAHKILASFALGI, FLLVFVFSLTSPIGSILGMVI, PPILQGIASGTFLYVAVVEII, and ILIKSFLLLLGFSGMAVVAIW.

Belongs to the ZIP transporter (TC 2.A.5) family.

The protein localises to the membrane. Functionally, may transport divalent cations. May participate, with dstA, in the regulation of the differentiation of stalk cells during development. This Dictyostelium discoideum (Social amoeba) protein is Protein zntD (zntD).